The sequence spans 692 residues: Ribonuclease R (692 aa).

The 322-residue stretch at 204–525 folds into the RNB domain; sequence RKDLRDLLCF…IVHRLLFHPL (322 aa). Positions 563 to 648 constitute an S1 motif domain; that stretch reads KKFLDEQPAT…LTQAIEWTLI (86 aa). Positions 651-692 are disordered; that stretch reads KERSSSKKKKAKAKSNATQVKKKSSSKKKKAVSKAKKNRGGK. A compositionally biased stretch (basic residues) spans 670-692; the sequence is VKKKSSSKKKKAVSKAKKNRGGK.

Belongs to the RNR ribonuclease family. RNase R subfamily.

Its subcellular location is the cytoplasm. It catalyses the reaction Exonucleolytic cleavage in the 3'- to 5'-direction to yield nucleoside 5'-phosphates.. Functionally, 3'-5' exoribonuclease that releases 5'-nucleoside monophosphates and is involved in maturation of structured RNAs. The sequence is that of Ribonuclease R from Chlamydia muridarum (strain MoPn / Nigg).